The primary structure comprises 526 residues: Rho guanine nucleotide exchange factor 3 (526 aa).

Residues 20 to 40 are disordered; that stretch reads ELPPASGPAKDAEEPSNKRVK. Phosphoserine is present on residues S47 and S70. Positions 122-304 constitute a DH domain; that stretch reads KRQEAIFELS…QGIVAEINTK (183 aa). The PH domain maps to 291 to 449; the sequence is INIIQGIVAE…WLNCIRQAKE (159 aa). The tract at residues 464-526 is disordered; that stretch reads EGSFLNPTTG…GNSRHGESNV (63 aa). A compositionally biased stretch (polar residues) spans 466–475; that stretch reads SFLNPTTGSR.

Interacts with RHOA and RHOB. In terms of tissue distribution, widely expressed. Highest levels are found in adult brain and skeletal muscle. Lower levels are found in heart and kidney.

Its subcellular location is the cytoplasm. Acts as a guanine nucleotide exchange factor (GEF) for RhoA and RhoB GTPases. The sequence is that of Rho guanine nucleotide exchange factor 3 (ARHGEF3) from Homo sapiens (Human).